The chain runs to 131 residues: Large ribosomal subunit protein uL14m (131 aa).

It belongs to the universal ribosomal protein uL14 family. As to quaternary structure, component of the mitochondrial large ribosomal subunit (mt-LSU). Mature N.crassa 74S mitochondrial ribosomes consist of a small (37S) and a large (54S) subunit. The 37S small subunit contains a 16S ribosomal RNA (16S mt-rRNA) and 32 different proteins. The 54S large subunit contains a 23S rRNA (23S mt-rRNA) and 42 different proteins.

It localises to the mitochondrion. Its function is as follows. Component of the mitochondrial ribosome (mitoribosome), a dedicated translation machinery responsible for the synthesis of mitochondrial genome-encoded proteins, including at least some of the essential transmembrane subunits of the mitochondrial respiratory chain. The mitoribosomes are attached to the mitochondrial inner membrane and translation products are cotranslationally integrated into the membrane. The polypeptide is Large ribosomal subunit protein uL14m (mrpl38) (Neurospora crassa (strain ATCC 24698 / 74-OR23-1A / CBS 708.71 / DSM 1257 / FGSC 987)).